The sequence spans 145 residues: uncharacterized protein (145 aa).

The helical transmembrane segment at isoleucine 104 to leucine 124 threads the bilayer.

It is found in the membrane. This is an uncharacterized protein from Saccharomyces cerevisiae (strain ATCC 204508 / S288c) (Baker's yeast).